Consider the following 164-residue polypeptide: Interferon gamma (164 aa).

An N-terminal signal peptide occupies residues Met-1 to Gly-19. Residues Asn-42 and Asn-61 are each glycosylated (N-linked (GlcNAc...) asparagine).

The protein belongs to the type II (or gamma) interferon family. As to quaternary structure, homodimer.

The protein resides in the secreted. Functionally, produced by lymphocytes activated by specific antigens or mitogens. IFN-gamma, in addition to having antiviral activity, has important immunoregulatory functions. It is a potent activator of macrophages, it has antiproliferative effects on transformed cells and it can potentiate the antiviral and antitumor effects of the type I interferons. The sequence is that of Interferon gamma (IFNG) from Meleagris gallopavo (Wild turkey).